The sequence spans 93 residues: Small ribosomal subunit protein uS19 (93 aa).

This sequence belongs to the universal ribosomal protein uS19 family.

In terms of biological role, protein S19 forms a complex with S13 that binds strongly to the 16S ribosomal RNA. This Saccharopolyspora erythraea (strain ATCC 11635 / DSM 40517 / JCM 4748 / NBRC 13426 / NCIMB 8594 / NRRL 2338) protein is Small ribosomal subunit protein uS19.